A 279-amino-acid polypeptide reads, in one-letter code: 3-methyl-2-oxobutanoate hydroxymethyltransferase 2 (279 aa).

2 residues coordinate Mg(2+): Asp58 and Asp97. 3-methyl-2-oxobutanoate contacts are provided by residues Asp58–Ser59, Asp97, and Lys126. Glu128 serves as a coordination point for Mg(2+). Glu195 functions as the Proton acceptor in the catalytic mechanism.

This sequence belongs to the PanB family. As to quaternary structure, homodecamer; pentamer of dimers. Mg(2+) serves as cofactor.

Its subcellular location is the cytoplasm. The enzyme catalyses 3-methyl-2-oxobutanoate + (6R)-5,10-methylene-5,6,7,8-tetrahydrofolate + H2O = 2-dehydropantoate + (6S)-5,6,7,8-tetrahydrofolate. It participates in cofactor biosynthesis; (R)-pantothenate biosynthesis; (R)-pantoate from 3-methyl-2-oxobutanoate: step 1/2. In terms of biological role, catalyzes the reversible reaction in which hydroxymethyl group from 5,10-methylenetetrahydrofolate is transferred onto alpha-ketoisovalerate to form ketopantoate. This is 3-methyl-2-oxobutanoate hydroxymethyltransferase 2 from Methylibium petroleiphilum (strain ATCC BAA-1232 / LMG 22953 / PM1).